Here is a 249-residue protein sequence, read N- to C-terminus: Type III pantothenate kinase (249 aa).

An ATP-binding site is contributed by 6-13 (DCGNSFIK). Substrate-binding positions include Tyr93 and 100–103 (GMDR). Asp102 serves as the catalytic Proton acceptor. Asp122 is a K(+) binding site. Thr125 is a binding site for ATP. Thr181 contributes to the substrate binding site.

It belongs to the type III pantothenate kinase family. Homodimer. The cofactor is NH4(+). K(+) serves as cofactor.

The protein resides in the cytoplasm. The enzyme catalyses (R)-pantothenate + ATP = (R)-4'-phosphopantothenate + ADP + H(+). It functions in the pathway cofactor biosynthesis; coenzyme A biosynthesis; CoA from (R)-pantothenate: step 1/5. Functionally, catalyzes the phosphorylation of pantothenate (Pan), the first step in CoA biosynthesis. The sequence is that of Type III pantothenate kinase from Pseudomonas putida (strain ATCC 47054 / DSM 6125 / CFBP 8728 / NCIMB 11950 / KT2440).